A 578-amino-acid chain; its full sequence is MTFSIENNKQVVLGEELGKLSDNERLKTQSNFLRGTIEQDLQDRITGGFTADNFQLIRFHGMYQQDDRDIRNERAKQKLEPLHNVMLRARMPGGIITPKQWLAIDKFATEHSLYGSIRLTTRQTFQFHGVLKPNIKLMHQTLNSIGIDSIATAGDVNRNVLCTTNPVESELHQEAYEWAKKISEHLLPKTKAYAEIWLDGEKVETTEDDEPILGKTYLPRKFKTTVVIPPQNDVDVHANDLNFVAIAEKGKLIGFNVLVGGGLAMTHGDTSTYPRRADDFGYIPLEKTLDVAAAVVTTQRDWGNRSNRKNAKTKYTLDRVGTDVFKAEVEKRAGIKFEVSRPYEFTERGDRIGWVEGIDGKHHLTLFIENGRLLDYPGKPLKTGVAEIAKIHKGDFRMTANQNLIVAGVSKSNKAKIEKLAREHGLMDEGVSEQRKNAMACVAFPTCPLAMAEAERFLPQFVTDVEGILDKHGLDKEDNIILRVTGCPNGCGRAMLAEIGLVGKAPGRYNLHLGGNRGGTRVPKMYKENITDKQILEEIDQLVGRWANERLPNECFGDFTVRVGIIEEVIISKRDFYA.

Residues C441, C447, C487, and C491 each contribute to the [4Fe-4S] cluster site. A siroheme-binding site is contributed by C491.

It belongs to the nitrite and sulfite reductase 4Fe-4S domain family. As to quaternary structure, alpha(8)-beta(8). The alpha component is a flavoprotein, the beta component is a hemoprotein. The cofactor is siroheme. Requires [4Fe-4S] cluster as cofactor.

The catalysed reaction is hydrogen sulfide + 3 NADP(+) + 3 H2O = sulfite + 3 NADPH + 4 H(+). It participates in sulfur metabolism; hydrogen sulfide biosynthesis; hydrogen sulfide from sulfite (NADPH route): step 1/1. In terms of biological role, component of the sulfite reductase complex that catalyzes the 6-electron reduction of sulfite to sulfide. This is one of several activities required for the biosynthesis of L-cysteine from sulfate. This is Sulfite reductase [NADPH] hemoprotein beta-component from Vibrio vulnificus (strain CMCP6).